Reading from the N-terminus, the 443-residue chain is MKGIEKLKEGYPLLNKLIATEEVFWVNPNMEKYETAIKDSPLSEENVKDAEERLKRFASYIAKVFPETKETKGIIESPLLKIPSMKQALEKHYKQPILGELLLKCDSHLPISGSIKARGGIYEVLKHAEQLALQHGMLTEEDDYSILDSDTCREFFAKYSIAVGSTGNLGLSIGIMSAKLGFNVTVHMSADAKQWKKDLLRSKGVNVIEYEADYSKAVKEGRQQADTDPSCYFVDDENSHDLFLGYAVAASRLQKQLEELEIVVDEEHPLFVYLPCGVGGGPGGVAFGLKLLYKDNVHCFFAEPTHSPCMLLGLMTGLHDKIAVQDIGIDNVTDADGLAVGRPSGFVGKTMEPFLSGNYTVSDEELYRLLKELADTENIYLEPSALAGMIGPVKVCKEDAYLQEQQLMKEMKKGTHIVWGTGGSMVPEDVINGYYKTGERLTI.

Lys-116 carries the post-translational modification N6-(pyridoxal phosphate)lysine.

Belongs to the serine/threonine dehydratase family. DsdA subfamily. The cofactor is pyridoxal 5'-phosphate.

The catalysed reaction is D-serine = pyruvate + NH4(+). This chain is Probable D-serine dehydratase, found in Bacillus cereus (strain AH187).